The primary structure comprises 216 residues: 2-phospho-L-lactate guanylyltransferase (216 aa).

The protein belongs to the CofC family. Homodimer.

It carries out the reaction (2S)-2-phospholactate + GTP + H(+) = (2S)-lactyl-2-diphospho-5'-guanosine + diphosphate. It functions in the pathway cofactor biosynthesis; coenzyme F420 biosynthesis. Functionally, guanylyltransferase that catalyzes the activation of (2S)-2-phospholactate (2-PL) as (2S)-lactyl-2-diphospho-5'-guanosine, via the condensation of 2-PL with GTP. It is involved in the biosynthesis of coenzyme F420, a hydride carrier cofactor. In Methanocaldococcus infernus (strain DSM 11812 / JCM 15783 / ME), this protein is 2-phospho-L-lactate guanylyltransferase.